Here is a 275-residue protein sequence, read N- to C-terminus: NH(3)-dependent NAD(+) synthetase (275 aa).

ATP is bound at residue 46-53 (GISGGQDS). Residue Asp-52 coordinates Mg(2+). Deamido-NAD(+) is bound at residue Arg-140. Position 160 (Thr-160) interacts with ATP. Mg(2+) is bound at residue Glu-165. 2 residues coordinate deamido-NAD(+): Lys-173 and Asp-180. 2 residues coordinate ATP: Lys-189 and Thr-211. 260–261 (HK) lines the deamido-NAD(+) pocket.

The protein belongs to the NAD synthetase family. Homodimer.

It catalyses the reaction deamido-NAD(+) + NH4(+) + ATP = AMP + diphosphate + NAD(+) + H(+). It participates in cofactor biosynthesis; NAD(+) biosynthesis; NAD(+) from deamido-NAD(+) (ammonia route): step 1/1. Functionally, catalyzes the ATP-dependent amidation of deamido-NAD to form NAD. Uses ammonia as a nitrogen source. This Salmonella typhi protein is NH(3)-dependent NAD(+) synthetase.